We begin with the raw amino-acid sequence, 90 residues long: Probable Fe(2+)-trafficking protein (90 aa).

This sequence belongs to the Fe(2+)-trafficking protein family.

Its function is as follows. Could be a mediator in iron transactions between iron acquisition and iron-requiring processes, such as synthesis and/or repair of Fe-S clusters in biosynthetic enzymes. This chain is Probable Fe(2+)-trafficking protein, found in Bordetella bronchiseptica (strain ATCC BAA-588 / NCTC 13252 / RB50) (Alcaligenes bronchisepticus).